A 580-amino-acid chain; its full sequence is NADH-quinone oxidoreductase subunit C/D (580 aa).

The interval 1-171 is NADH dehydrogenase I subunit C; it reads MSLDQAIPEA…PPFVLTDRLF (171 aa). The interval 195–580 is NADH dehydrogenase I subunit D; the sequence is ELMVLNFGPH…IDFVMSDVDR (386 aa).

This sequence in the N-terminal section; belongs to the complex I 30 kDa subunit family. The protein in the C-terminal section; belongs to the complex I 49 kDa subunit family. In terms of assembly, NDH-1 is composed of 13 different subunits. Subunits NuoB, CD, E, F, and G constitute the peripheral sector of the complex.

It localises to the cell inner membrane. It catalyses the reaction a quinone + NADH + 5 H(+)(in) = a quinol + NAD(+) + 4 H(+)(out). Functionally, NDH-1 shuttles electrons from NADH, via FMN and iron-sulfur (Fe-S) centers, to quinones in the respiratory chain. The immediate electron acceptor for the enzyme in this species is believed to be ubiquinone. Couples the redox reaction to proton translocation (for every two electrons transferred, four hydrogen ions are translocated across the cytoplasmic membrane), and thus conserves the redox energy in a proton gradient. The sequence is that of NADH-quinone oxidoreductase subunit C/D from Cereibacter sphaeroides (strain KD131 / KCTC 12085) (Rhodobacter sphaeroides).